The sequence spans 179 residues: ATP synthase subunit delta (179 aa).

This sequence belongs to the ATPase delta chain family. F-type ATPases have 2 components, F(1) - the catalytic core - and F(0) - the membrane proton channel. F(1) has five subunits: alpha(3), beta(3), gamma(1), delta(1), epsilon(1). F(0) has three main subunits: a(1), b(2) and c(10-14). The alpha and beta chains form an alternating ring which encloses part of the gamma chain. F(1) is attached to F(0) by a central stalk formed by the gamma and epsilon chains, while a peripheral stalk is formed by the delta and b chains.

The protein resides in the cell membrane. Its function is as follows. F(1)F(0) ATP synthase produces ATP from ADP in the presence of a proton or sodium gradient. F-type ATPases consist of two structural domains, F(1) containing the extramembraneous catalytic core and F(0) containing the membrane proton channel, linked together by a central stalk and a peripheral stalk. During catalysis, ATP synthesis in the catalytic domain of F(1) is coupled via a rotary mechanism of the central stalk subunits to proton translocation. Functionally, this protein is part of the stalk that links CF(0) to CF(1). It either transmits conformational changes from CF(0) to CF(1) or is implicated in proton conduction. In Clostridium acetobutylicum (strain ATCC 824 / DSM 792 / JCM 1419 / IAM 19013 / LMG 5710 / NBRC 13948 / NRRL B-527 / VKM B-1787 / 2291 / W), this protein is ATP synthase subunit delta.